Reading from the N-terminus, the 204-residue chain is Crossover junction endodeoxyribonuclease RuvC (204 aa).

Catalysis depends on residues aspartate 7, glutamate 68, and aspartate 141. Aspartate 7, glutamate 68, and aspartate 141 together coordinate Mg(2+). Residues 164–204 (QAVAAHRTSGASRTPGAAGTPGPSRTPGAPGTSRTLKGRTA) are disordered.

This sequence belongs to the RuvC family. As to quaternary structure, homodimer which binds Holliday junction (HJ) DNA. The HJ becomes 2-fold symmetrical on binding to RuvC with unstacked arms; it has a different conformation from HJ DNA in complex with RuvA. In the full resolvosome a probable DNA-RuvA(4)-RuvB(12)-RuvC(2) complex forms which resolves the HJ. Requires Mg(2+) as cofactor.

It localises to the cytoplasm. It carries out the reaction Endonucleolytic cleavage at a junction such as a reciprocal single-stranded crossover between two homologous DNA duplexes (Holliday junction).. Its function is as follows. The RuvA-RuvB-RuvC complex processes Holliday junction (HJ) DNA during genetic recombination and DNA repair. Endonuclease that resolves HJ intermediates. Cleaves cruciform DNA by making single-stranded nicks across the HJ at symmetrical positions within the homologous arms, yielding a 5'-phosphate and a 3'-hydroxyl group; requires a central core of homology in the junction. The consensus cleavage sequence is 5'-(A/T)TT(C/G)-3'. Cleavage occurs on the 3'-side of the TT dinucleotide at the point of strand exchange. HJ branch migration catalyzed by RuvA-RuvB allows RuvC to scan DNA until it finds its consensus sequence, where it cleaves and resolves the cruciform DNA. The sequence is that of Crossover junction endodeoxyribonuclease RuvC from Streptomyces griseus subsp. griseus (strain JCM 4626 / CBS 651.72 / NBRC 13350 / KCC S-0626 / ISP 5235).